The chain runs to 656 residues: L-type lectin-domain containing receptor kinase S.1 (656 aa).

An N-terminal signal peptide occupies residues 1–29 (MSWQWRRRQWPSPLLLILIVLHLVSSSSA). Residues 30-273 (IDFLYNSFSS…ARRILAWSLS (244 aa)) form a legume-lectin like region. Residues 30–304 (IDFLYNSFSS…SSSLSTGAIA (275 aa)) lie on the Extracellular side of the membrane. Residues N42, N63, N121, N139, N191, N219, N282, and N293 are each glycosylated (N-linked (GlcNAc...) asparagine). The chain crosses the membrane as a helical span at residues 305-325 (GIVIGCVVFVALIGFGGYLIW). At 326–656 (KKLMREEEEE…AAADSTAAHA (331 aa)) the chain is on the cytoplasmic side. The 279-residue stretch at 361 to 639 (FSNDRLLGSG…LLGSPQEDLL (279 aa)) folds into the Protein kinase domain. ATP is bound by residues 367-375 (LGSGGFGKV) and K389. The active-site Proton acceptor is the D485.

This sequence in the C-terminal section; belongs to the protein kinase superfamily. Ser/Thr protein kinase family. It in the N-terminal section; belongs to the leguminous lectin family.

The protein localises to the cell membrane. It carries out the reaction L-seryl-[protein] + ATP = O-phospho-L-seryl-[protein] + ADP + H(+). The enzyme catalyses L-threonyl-[protein] + ATP = O-phospho-L-threonyl-[protein] + ADP + H(+). Its function is as follows. Involved in resistance response to the pathogenic oomycetes Phytophthora infestans and Phytophthora capsici and to the pathogenic bacteria Pseudomonas syringae. In Arabidopsis thaliana (Mouse-ear cress), this protein is L-type lectin-domain containing receptor kinase S.1.